The primary structure comprises 227 residues: Cytidylate kinase (227 aa).

Position 12–20 (12–20 (GPSGVGKGT)) interacts with ATP.

It belongs to the cytidylate kinase family. Type 1 subfamily.

Its subcellular location is the cytoplasm. It catalyses the reaction CMP + ATP = CDP + ADP. The catalysed reaction is dCMP + ATP = dCDP + ADP. This chain is Cytidylate kinase, found in Shewanella denitrificans (strain OS217 / ATCC BAA-1090 / DSM 15013).